The following is a 392-amino-acid chain: Formate-dependent phosphoribosylglycinamide formyltransferase (392 aa).

Residues glutamate 22–leucine 23 and glutamate 82 each bind N(1)-(5-phospho-beta-D-ribosyl)glycinamide. ATP is bound by residues arginine 114, lysine 155, serine 160 to glutamine 165, glutamate 195 to valine 198, and glutamate 203. The region spanning arginine 119 to leucine 308 is the ATP-grasp domain. Positions 267 and 279 each coordinate Mg(2+). Residues aspartate 286, lysine 355, and arginine 362–arginine 363 contribute to the N(1)-(5-phospho-beta-D-ribosyl)glycinamide site.

This sequence belongs to the PurK/PurT family. Homodimer.

It carries out the reaction N(1)-(5-phospho-beta-D-ribosyl)glycinamide + formate + ATP = N(2)-formyl-N(1)-(5-phospho-beta-D-ribosyl)glycinamide + ADP + phosphate + H(+). It functions in the pathway purine metabolism; IMP biosynthesis via de novo pathway; N(2)-formyl-N(1)-(5-phospho-D-ribosyl)glycinamide from N(1)-(5-phospho-D-ribosyl)glycinamide (formate route): step 1/1. In terms of biological role, involved in the de novo purine biosynthesis. Catalyzes the transfer of formate to 5-phospho-ribosyl-glycinamide (GAR), producing 5-phospho-ribosyl-N-formylglycinamide (FGAR). Formate is provided by PurU via hydrolysis of 10-formyl-tetrahydrofolate. The protein is Formate-dependent phosphoribosylglycinamide formyltransferase of Pectobacterium carotovorum subsp. carotovorum (strain PC1).